We begin with the raw amino-acid sequence, 811 residues long: Beta-catenin homolog sys-1 (811 aa).

Positions 1 to 105 (MHSTGEPQRG…SRGPAAPAQN (105 aa)) are disordered. The segment covering 64–103 (QQQQMTPQALSTQQQQQVQQQQQRQLYSSPSPSRGPAAPA) has biased composition (low complexity).

As to quaternary structure, interacts with TCF transcription factor pop-1 (via N-terminal region); interaction is direct.

It localises to the nucleus. The protein localises to the cytoplasm. The protein resides in the cytoplasmic granule. Its subcellular location is the cytoskeleton. It is found in the microtubule organizing center. It localises to the centrosome. The protein localises to the chromosome. The protein resides in the centromere. Its subcellular location is the kinetochore. Functionally, transcription coregulator. Part of the Wnt signaling asymmetry pathway, probably acting downstream of putative frizzled ligand mom-2, Wnt/frizzled receptors lin-17 and mom-5, and dishevelled homolog dsh-2. Activates or represses target gene expression, depending on upstream Wnt signals and interactions with transcription factors, such as pop-1. Required for the activation of Wnt-responsive genes in the E blastomere; thereby leading to a role in endoderm specification and gut development. Reciprocal distribution patterns of sys-1 and pop-1/TCF in the daughters of anterior-posterior cell divisions functions in specifying cell fate; a higher sys-1 to pop-1 ratio promotes the posterior cell fate, whereas a low sys-1 to pop-1 ratio promotes the anterior fate. Represses expression of homeobox ttx-3 in neuroblasts of the SIAD/SIBV lineage, perhaps acting by blocking its transcriptional activation by a complex consisting of ref-2 and pop-1. Required for early organization of the hermaphrodite, but not the male, gonad; involved in generation of regulatory cells, known as the distal tip cells (DTC), and in formation of the somatic gonadal primordium. Involved in regulating asymmetric divisions of the somatic gonadal precursor cells (SGP), Z1 and Z4. This Caenorhabditis elegans protein is Beta-catenin homolog sys-1.